Here is a 98-residue protein sequence, read N- to C-terminus: Class II hydrophobin 2 (98 aa).

An N-terminal signal peptide occupies residues Met1–Ala21. 4 disulfide bridges follow: Cys34–Cys80, Cys41–Cys71, Cys42–Cys54, and Cys81–Cys92.

The protein belongs to the cerato-ulmin hydrophobin family.

The protein resides in the secreted. The protein localises to the cell wall. Functionally, aerial growth, conidiation, and dispersal of filamentous fungi in the environment rely upon a capability of their secreting small amphipathic proteins called hydrophobins (HPBs) with low sequence identity. Class I can self-assemble into an outermost layer of rodlet bundles on aerial cell surfaces, conferring cellular hydrophobicity that supports fungal growth, development and dispersal; whereas Class II form highly ordered films at water-air interfaces through intermolecular interactions but contribute nothing to the rodlet structure. In Botryotinia fuckeliana, hydrophobins are not involved in conferring surface hydrophobicity to conidia and aerial hyphae and their function in sclerotia and fruiting bodies remains to be investigated. The protein is Class II hydrophobin 2 of Botryotinia fuckeliana (strain B05.10) (Noble rot fungus).